The chain runs to 198 residues: Large ribosomal subunit protein uL13 (198 aa).

It belongs to the universal ribosomal protein uL13 family.

The sequence is that of Large ribosomal subunit protein uL13 (RPL13A) from Tetrahymena thermophila (strain SB210).